The sequence spans 189 residues: Molybdenum cofactor guanylyltransferase (189 aa).

GTP is bound by residues 10-12, K23, N51, D69, and D99; that span reads LAG. D99 contributes to the Mg(2+) binding site.

Belongs to the MobA family. As to quaternary structure, monomer. The cofactor is Mg(2+).

The protein resides in the cytoplasm. It catalyses the reaction Mo-molybdopterin + GTP + H(+) = Mo-molybdopterin guanine dinucleotide + diphosphate. Its function is as follows. Transfers a GMP moiety from GTP to Mo-molybdopterin (Mo-MPT) cofactor (Moco or molybdenum cofactor) to form Mo-molybdopterin guanine dinucleotide (Mo-MGD) cofactor. The protein is Molybdenum cofactor guanylyltransferase of Pasteurella multocida (strain Pm70).